The sequence spans 270 residues: Putative phosphoenolpyruvate synthase regulatory protein (270 aa).

Gly-150 to Thr-157 provides a ligand contact to ADP.

The protein belongs to the pyruvate, phosphate/water dikinase regulatory protein family. PSRP subfamily.

The enzyme catalyses [pyruvate, water dikinase] + ADP = [pyruvate, water dikinase]-phosphate + AMP + H(+). It catalyses the reaction [pyruvate, water dikinase]-phosphate + phosphate + H(+) = [pyruvate, water dikinase] + diphosphate. In terms of biological role, bifunctional serine/threonine kinase and phosphorylase involved in the regulation of the phosphoenolpyruvate synthase (PEPS) by catalyzing its phosphorylation/dephosphorylation. In Shewanella pealeana (strain ATCC 700345 / ANG-SQ1), this protein is Putative phosphoenolpyruvate synthase regulatory protein.